Consider the following 218-residue polypeptide: Glutathione S-transferase Mu 4 (218 aa).

A GST N-terminal domain is found at 1–88; it reads MPMTLGYWDI…YIARKHNLCG (88 aa). Residues 7–8, 46–50, 59–60, and 72–73 each bind glutathione; these read YW, WLSEK, NL, and QS. The region spanning 90–208 is the GST C-terminal domain; sequence TEEEKIRVDI…KTSRFLRTPL (119 aa). Residue Tyr-116 participates in substrate binding.

It belongs to the GST superfamily. Mu family. As to quaternary structure, homodimer.

Its subcellular location is the cytoplasm. The enzyme catalyses RX + glutathione = an S-substituted glutathione + a halide anion + H(+). It catalyses the reaction 1-chloro-2,4-dinitrobenzene + glutathione = 2,4-dinitrophenyl-S-glutathione + chloride + H(+). It carries out the reaction (13S,14S)-epoxy-(4Z,7Z,9E,11E,16Z,19Z)-docosahexaenoate + glutathione = (13R)-S-glutathionyl-(14S)-hydroxy-(4Z,7Z,9E,11E,16Z,19Z)-docosahexaenoate. The catalysed reaction is leukotriene C4 = leukotriene A4 + glutathione. In terms of biological role, conjugation of reduced glutathione to a wide number of exogenous and endogenous hydrophobic electrophiles. Catalyzes the conjugation of leukotriene A4 with reduced glutathione (GSH) to form leukotriene C4. Can also catalyze the transfer of a glutathionyl group from glutathione (GSH) to 13(S),14(S)-epoxy-docosahexaenoic acid to form maresin conjugate in tissue regeneration 1 (MCTR1), a bioactive lipid mediator that possess potent anti-inflammatory and proresolving actions. This is Glutathione S-transferase Mu 4 (Gstm4) from Rattus norvegicus (Rat).